Reading from the N-terminus, the 461-residue chain is MEDLYRKLPSVDEILREEKINEVLKFNKREVVKNCIREVLERYREKIRRGEVKKIDIEKILEDVVSQIEEKKKMSLRRVVNGTGIILHTNLGRALFPPQVKEHLLDIAFCYSTLEYDVEKGERGSRYSHVEKLLCELLDVEAALVVNNNAAAVLLALNTLAKGKEVIVSRGQLIEIGGSFRIPDVMLQSGAILKEVGTTNKTYDFDYINAITENTALLLKVHTSNYRIVGFTHDIATEELVQIGRKYDIPTMEDLGSGVMVDLREYGLPHEPTVQEVVKAGVDIVTFSGDKLLGGPQAGIIVGKKKYIDLMKKNPLTRALRVDKLCLVSLECVLRIYRDSNPVEAIPTLKMLTAKPSQLYEKAAILNKLVLTIPKVKSKVVEITSLSGGGSLPEESLPSYGITLEVEGFDTEDLERRLRIRDIPIITRIVDGVVTIDVRTLLEGDEEVILHALEEITGVCQ.

The residue at position 291 (lysine 291) is an N6-(pyridoxal phosphate)lysine.

This sequence belongs to the SelA family. It depends on pyridoxal 5'-phosphate as a cofactor.

It is found in the cytoplasm. It carries out the reaction L-seryl-tRNA(Sec) + selenophosphate + H(+) = L-selenocysteinyl-tRNA(Sec) + phosphate. Its pathway is aminoacyl-tRNA biosynthesis; selenocysteinyl-tRNA(Sec) biosynthesis; selenocysteinyl-tRNA(Sec) from L-seryl-tRNA(Sec) (bacterial route): step 1/1. Functionally, converts seryl-tRNA(Sec) to selenocysteinyl-tRNA(Sec) required for selenoprotein biosynthesis. The chain is L-seryl-tRNA(Sec) selenium transferase from Caldanaerobacter subterraneus subsp. tengcongensis (strain DSM 15242 / JCM 11007 / NBRC 100824 / MB4) (Thermoanaerobacter tengcongensis).